Reading from the N-terminus, the 339-residue chain is UPF0450 protein C17orf58 (339 aa).

An N-terminal signal peptide occupies residues 1–17 (MTARAFWLLCLIVGSSP). The disordered stretch occupies residues 17 to 191 (PEAPVAERKT…PQRDAEPGAE (175 aa)). Residues 21-36 (VAERKTSPPHSRKPDS) show a composition bias toward basic and acidic residues. Over residues 56-72 (APQRPRAAEVAPAARAW) the composition is skewed to low complexity. The span at 112 to 125 (ASPRREPASEDAPR) shows a compositional bias: basic and acidic residues. The segment covering 132–163 (LRFPAARPPALATEGSAGHAHPNRPRAAALAP) has biased composition (low complexity). Disulfide bonds link Cys193–Cys267, Cys197–Cys271, and Cys208–Cys338. One can recognise an NTR domain in the interval 193–338 (CARACRSDLD…QIQGAIHTQC (146 aa)).

Belongs to the UPF0450 family.

The protein is UPF0450 protein C17orf58 (C17orf58) of Homo sapiens (Human).